We begin with the raw amino-acid sequence, 417 residues long: Serine hydroxymethyltransferase (417 aa).

(6S)-5,6,7,8-tetrahydrofolate contacts are provided by residues L121 and 125–127 (GHL). K229 bears the N6-(pyridoxal phosphate)lysine mark. 355-357 (SPF) is a (6S)-5,6,7,8-tetrahydrofolate binding site.

Belongs to the SHMT family. As to quaternary structure, homodimer. The cofactor is pyridoxal 5'-phosphate.

It localises to the cytoplasm. The catalysed reaction is (6R)-5,10-methylene-5,6,7,8-tetrahydrofolate + glycine + H2O = (6S)-5,6,7,8-tetrahydrofolate + L-serine. Its pathway is one-carbon metabolism; tetrahydrofolate interconversion. It functions in the pathway amino-acid biosynthesis; glycine biosynthesis; glycine from L-serine: step 1/1. Its function is as follows. Catalyzes the reversible interconversion of serine and glycine with tetrahydrofolate (THF) serving as the one-carbon carrier. This reaction serves as the major source of one-carbon groups required for the biosynthesis of purines, thymidylate, methionine, and other important biomolecules. Also exhibits THF-independent aldolase activity toward beta-hydroxyamino acids, producing glycine and aldehydes, via a retro-aldol mechanism. The sequence is that of Serine hydroxymethyltransferase from Enterobacter sp. (strain 638).